We begin with the raw amino-acid sequence, 1574 residues long: Disco-interacting protein 2 homolog B (1574 aa).

Residues Ser9, Ser50, and Ser53 each carry the phosphoserine modification. The region spanning 12–130 (AVAALPPEVR…PMPTKRRSTF (119 aa)) is the DMAP1-binding domain. Positions 31 to 166 (LSEGDITQKG…AALSAALQQS (136 aa)) are disordered. Residues 52–62 (YSPQTQETDSI) are compositionally biased toward polar residues. Residues 69–82 (QTPAPTAAQTSAPS) show a composition bias toward low complexity. The residue at position 70 (Thr70) is a Phosphothreonine. The segment covering 91-103 (GARDERYRSDIHT) has biased composition (basic and acidic residues). Ser99 carries the phosphoserine modification. Residue Thr139 is modified to Phosphothreonine. Phosphoserine is present on residues Ser145, Ser147, and Ser152. Low complexity predominate over residues 154–166 (RRQAALSAALQQS). Phosphoserine occurs at positions 177, 192, and 202. The interval 178–200 (IQGSSTSSSASSTLSHGEVKGTS) is disordered. Low complexity predominate over residues 181-192 (SSTSSSASSTLS). The tract at residues 217–244 (APPDVTATTSSSSSSLRPANIDLPPSGI) is disordered. Ser256 carries the phosphoserine modification.

This sequence belongs to the DIP2 family. As to quaternary structure, interacts with alpha-tubulin. As to expression, highly expressed in brain and spinal cord (at protein level). In brain, expression is detected in the main olfactory bulb, cortex, lateral ventricle, cornu ammonis 1, cornu ammonis 3, dentate gyrus, striatum, cerebellar cortex and medial habenula. Expressed primarily in neurons including excitatory pyramidal neurons and inhibitory interneurons.

It localises to the cell projection. The protein localises to the dendrite. The protein resides in the axon. Its subcellular location is the perikaryon. Functionally, negatively regulates axonal outgrowth and is essential for normal synaptic transmission. Not required for regulation of axon polarity. Promotes acetylation of alpha-tubulin. The sequence is that of Disco-interacting protein 2 homolog B (Dip2b) from Mus musculus (Mouse).